A 255-amino-acid polypeptide reads, in one-letter code: High-affinity branched-chain amino acid transport ATP-binding protein BraF (255 aa).

The ABC transporter domain occupies 6–254 (LEVSGLTMRF…PDVIKAYLGE (249 aa)). ATP is bound at residue 38–45 (GPNGAGKT).

The protein belongs to the ABC transporter superfamily.

It is found in the cell inner membrane. Functionally, component of the high affinity leucine, isoleucine, valine, transport system (LIV-I), which is operative without Na(+) and is specific for alanine and threonine, in addition to branched-chain amino acids. The chain is High-affinity branched-chain amino acid transport ATP-binding protein BraF (braF) from Pseudomonas aeruginosa (strain ATCC 15692 / DSM 22644 / CIP 104116 / JCM 14847 / LMG 12228 / 1C / PRS 101 / PAO1).